The primary structure comprises 236 residues: DNA repair and recombination protein RadB (236 aa).

The protein belongs to the eukaryotic RecA-like protein family. RadB subfamily.

Involved in DNA repair and in homologous recombination. May regulate the cleavage reactions of the branch-structured DNA. Has a very weak ATPase activity that is not stimulated by DNA. Binds DNA but does not promote DNA strands exchange. In Halobacterium salinarum (strain ATCC 29341 / DSM 671 / R1), this protein is DNA repair and recombination protein RadB.